A 330-amino-acid chain; its full sequence is Protein LEG1 homolog (330 aa).

Residues 1–20 form the signal peptide; sequence MAFLPSWVCVLVGSFSASLA. N-linked (GlcNAc...) asparagine glycans are attached at residues asparagine 24 and asparagine 69.

This sequence belongs to the LEG1 family. As to expression, detected in saliva and in hypomineralized dental enamel (at protein level).

The protein localises to the secreted. Functionally, may be involved in early liver development. In Homo sapiens (Human), this protein is Protein LEG1 homolog.